A 402-amino-acid polypeptide reads, in one-letter code: 1-deoxy-D-xylulose 5-phosphate reductoisomerase (402 aa).

Positions 10, 11, 12, 13, 38, and 124 each coordinate NADPH. A 1-deoxy-D-xylulose 5-phosphate-binding site is contributed by Lys-125. Residue Glu-126 participates in NADPH binding. Residue Asp-150 coordinates Mn(2+). 1-deoxy-D-xylulose 5-phosphate-binding residues include Ser-151, Glu-152, Ser-186, and His-209. Glu-152 provides a ligand contact to Mn(2+). An NADPH-binding site is contributed by Gly-215. 1-deoxy-D-xylulose 5-phosphate-binding residues include Ser-222, Asn-227, Lys-228, and Glu-231. Glu-231 contributes to the Mn(2+) binding site.

This sequence belongs to the DXR family. It depends on Mg(2+) as a cofactor. The cofactor is Mn(2+).

It catalyses the reaction 2-C-methyl-D-erythritol 4-phosphate + NADP(+) = 1-deoxy-D-xylulose 5-phosphate + NADPH + H(+). It participates in isoprenoid biosynthesis; isopentenyl diphosphate biosynthesis via DXP pathway; isopentenyl diphosphate from 1-deoxy-D-xylulose 5-phosphate: step 1/6. Functionally, catalyzes the NADPH-dependent rearrangement and reduction of 1-deoxy-D-xylulose-5-phosphate (DXP) to 2-C-methyl-D-erythritol 4-phosphate (MEP). In Vibrio vulnificus (strain YJ016), this protein is 1-deoxy-D-xylulose 5-phosphate reductoisomerase.